Here is a 262-residue protein sequence, read N- to C-terminus: Nodulation protein J (262 aa).

In terms of domain architecture, ABC transmembrane type-2 spans 33–259 (ASILGNLADP…FLSTALLRRR (227 aa)). Transmembrane regions (helical) follow at residues 35–55 (ILGN…GLGM), 62–82 (GVSY…MTAS), 102–122 (AILH…AWAA), 127–147 (LAGT…WVSL), 148–168 (LYAL…AMIV), 177–197 (YFIF…GAVF), and 231–251 (LVHV…PFFL).

It belongs to the ABC-2 integral membrane protein family. Lipooligosaccharide exporter (TC 3.A.1.102) subfamily. As to quaternary structure, the complex is composed of two ATP-binding proteins (NodI) and two transmembrane proteins (NodJ).

The protein localises to the cell inner membrane. In terms of biological role, part of the ABC transporter complex NodIJ involved in the export of the nodulation factors (Nod factors), the bacterial signal molecules that induce symbiosis and subsequent nodulation induction. Nod factors are LCO (lipo-chitin oligosaccharide), a modified beta-1,4-linked N-acetylglucosamine oligosaccharide. This subunit encodes the transporter. The chain is Nodulation protein J (nodJ) from Rhizobium meliloti (strain 1021) (Ensifer meliloti).